Reading from the N-terminus, the 147-residue chain is Hemoglobin subunit epsilon-1 (147 aa).

The Globin domain maps to H3–H147. The heme b site is built by H64 and H93.

Belongs to the globin family. As to quaternary structure, heterotetramer of two epsilon chains and two alpha chains. As to expression, red blood cells.

In terms of biological role, beta-type chain found in early embryos. The chain is Hemoglobin subunit epsilon-1 (HBE1) from Capra hircus (Goat).